The following is a 262-amino-acid chain: MANPYERGPNPTDALLEASSGPFSVSEENVSRLSASGFGGGTIYYPRENNTYGAVAISPGYTGTEASIAWLGERIASHGFVVITIDTITTLDQPDSRAEQLNAALNHMINRASSTVRSRIDSSRLAVMGHSMGGGGTLRLASQRPDLKAAIPLTPWHLNKNWSSVTVPTLIIGADLDTIAPVATHAKPFYNSLPSSISKAYLELDGATHFAPNIPNKIIGKYSVAWLKRFVDNDTRYTQFLCPGPRDGLFGEVEEYRSTCPF.

Tyrosine 61 serves as a coordination point for poly(ethylene terephthalate). Catalysis depends on serine 131, which acts as the Nucleophile. Poly(ethylene terephthalate) is bound by residues methionine 132 and tryptophan 156. Residues aspartate 177 and histidine 209 each act as charge relay system in the active site. Cysteine 242 and cysteine 260 are joined by a disulfide.

It belongs to the AB hydrolase superfamily.

The protein resides in the secreted. It localises to the periplasm. The enzyme catalyses (ethylene terephthalate)(n) + H2O = (ethylene terephthalate)(n-1) + 4-[(2-hydroxyethoxy)carbonyl]benzoate + H(+). The catalysed reaction is a butanoate ester + H2O = an aliphatic alcohol + butanoate + H(+). It catalyses the reaction an acetyl ester + H2O = an aliphatic alcohol + acetate + H(+). It carries out the reaction cutin + H2O = cutin monomers.. Functionally, catalyzes the hydrolysis of cutin, a polyester that forms the structure of plant cuticle. Shows esterase activity towards p-nitrophenol-linked aliphatic esters (pNP-aliphatic esters). Capable of degrading the plastic poly(ethylene terephthalate) (PET), the most abundant polyester plastic in the world. Capable of degrading the bioplastic poly(lactic acid) (PLLA). This Thermobifida cellulosilytica protein is Cutinase 1.